The chain runs to 117 residues: Large ribosomal subunit protein bL20c (117 aa).

The protein belongs to the bacterial ribosomal protein bL20 family.

The protein resides in the plastid. Its subcellular location is the chloroplast. Functionally, binds directly to 23S ribosomal RNA and is necessary for the in vitro assembly process of the 50S ribosomal subunit. It is not involved in the protein synthesizing functions of that subunit. This chain is Large ribosomal subunit protein bL20c, found in Manihot esculenta (Cassava).